The sequence spans 852 residues: Cell surface glycoprotein (852 aa).

Positions 1 to 34 are cleaved as a signal peptide; it reads MTDTTGKLRAVLLTALMVGSVIGAGVAFTGGAAA. A glycan (N-linked (GalNAc...) (glycosaminoglycan) asparagine) is linked at Asn-36. Residues 84–131 form a disordered region; that stretch reads KLDNEKEVSPATLSRTGGSDEGVPLQMPIPEDQSTGSYDSNGPDNDEA. Positions 115–126 are enriched in polar residues; the sequence is DQSTGSYDSNGP. Residues Asn-339, Asn-398, Asn-438, Asn-513, Asn-643, Asn-727, Asn-751, and Asn-787 are each glycosylated (N-linked (Glc...) asparagine). Residues 772–828 are disordered; the sequence is ELEEPDQTTVDQPENNQTMTTTMTETTTETTTEMTTTQENTTENGSEGTSDGESGGS. A compositionally biased stretch (low complexity) spans 785-823; sequence ENNQTMTTTMTETTTETTTEMTTTQENTTENGSEGTSDG. 14 O-linked (Gal...) threonine glycosylation sites follow: Thr-789, Thr-791, Thr-792, Thr-793, Thr-795, Thr-797, Thr-798, Thr-799, Thr-801, Thr-802, Thr-803, Thr-806, Thr-807, and Thr-808. Asn-811 is a glycosylation site (N-linked (Glc...) asparagine). Thr-812 and Thr-813 each carry an O-linked (Gal...) threonine glycan. An N-linked (Glc...) asparagine glycan is attached at Asn-815. Residues 829–849 form a helical membrane-spanning segment; the sequence is IPGFGVGVALVAVLGAALLAL. Residues 830–832 carry the PGF sorting signal motif; it reads PGF.

This sequence belongs to the halobacterial S-layer protein family. In terms of processing, N-linked glycan at Asn-36 consists of a glycosaminoglycan chain, constructed by a repeating sulfated pentasaccharide block composed of GlcNAc, GalNAc, Gal, GalA, 3-O-methyl-GalA, and sulfate in the molar ratio of 1:1:1:1:1:2; the other N-linked glycans contain Glc, GlcA and IdoA. Post-translationally, O-linked glycans consist of Glc-Gal disaccharides. The C-terminus (residues 770-778) is lipidated with diphytanylglyceryl phosphate. In terms of processing, cleaved by the archaeosortase ArtA at the C-terminus, with removal of a short hydrophobic segment.

It localises to the secreted. The protein resides in the cell wall. It is found in the S-layer. The protein localises to the cell membrane. Its function is as follows. S-layer protein. The S-layer is a paracrystalline mono-layered assembly of proteins which coat the surface of the cell. This Halobacterium salinarum (strain ATCC 29341 / DSM 671 / R1) protein is Cell surface glycoprotein (csg).